The chain runs to 118 residues: Large ribosomal subunit protein bL20 (118 aa).

This sequence belongs to the bacterial ribosomal protein bL20 family.

Functionally, binds directly to 23S ribosomal RNA and is necessary for the in vitro assembly process of the 50S ribosomal subunit. It is not involved in the protein synthesizing functions of that subunit. The sequence is that of Large ribosomal subunit protein bL20 from Erwinia tasmaniensis (strain DSM 17950 / CFBP 7177 / CIP 109463 / NCPPB 4357 / Et1/99).